The chain runs to 655 residues: Peroxidase skpo-1 (655 aa).

The first 19 residues, 1-19, serve as a signal peptide directing secretion; it reads MKSLLFSILLIYLIQLVRS. Positions 22-56 constitute a ShKT domain; that stretch reads CTDKHIHCFFWSQEGECEVNPRWMKKHCQKACGTC. Disulfide bonds link Cys22/Cys56, Cys29/Cys49, Cys38/Cys53, and Cys133/Cys150. His222 serves as the catalytic Proton acceptor. A heme b-binding site is contributed by His428. Intrachain disulfides connect Cys520/Cys576 and Cys617/Cys642.

Belongs to the peroxidase family. XPO subfamily. The cofactor is heme b. In terms of tissue distribution, exclusively expressed in hypodermis.

The enzyme catalyses 2 a phenolic donor + H2O2 = 2 a phenolic radical donor + 2 H2O. Involved in hypodermal immune response against some types of bacterial infection. Probably utilizes H(2)O(2) produced by the NADPH oxidase bli-3. May play a role in cuticule biosynthesis. This Caenorhabditis elegans protein is Peroxidase skpo-1.